The following is a 100-amino-acid chain: MATKLVESEIENKLEALNALITDDTPWERSGDSIKKTFTFKSFIRAFGWMSQMAIWAEKLKHHPEWFNVYNKVEVTLTTHDAGGLTELDFSLAEKMEKFK.

Belongs to the pterin-4-alpha-carbinolamine dehydratase family.

It carries out the reaction (4aS,6R)-4a-hydroxy-L-erythro-5,6,7,8-tetrahydrobiopterin = (6R)-L-erythro-6,7-dihydrobiopterin + H2O. This Alteromonas mediterranea (strain DSM 17117 / CIP 110805 / LMG 28347 / Deep ecotype) protein is Putative pterin-4-alpha-carbinolamine dehydratase.